Consider the following 160-residue polypeptide: Ribosomal RNA large subunit methyltransferase H (160 aa).

S-adenosyl-L-methionine contacts are provided by leucine 76 and glycine 108.

This sequence belongs to the RNA methyltransferase RlmH family. As to quaternary structure, homodimer.

Its subcellular location is the cytoplasm. It carries out the reaction pseudouridine(1915) in 23S rRNA + S-adenosyl-L-methionine = N(3)-methylpseudouridine(1915) in 23S rRNA + S-adenosyl-L-homocysteine + H(+). Its function is as follows. Specifically methylates the pseudouridine at position 1915 (m3Psi1915) in 23S rRNA. This is Ribosomal RNA large subunit methyltransferase H from Nitrobacter winogradskyi (strain ATCC 25391 / DSM 10237 / CIP 104748 / NCIMB 11846 / Nb-255).